The sequence spans 387 residues: 1-deoxy-D-xylulose 5-phosphate reductoisomerase (387 aa).

5 residues coordinate NADPH: Thr-10, Gly-11, Ile-13, Asn-38, and Asn-122. Residue Lys-123 participates in 1-deoxy-D-xylulose 5-phosphate binding. Glu-124 contributes to the NADPH binding site. Asp-148 is a binding site for Mn(2+). Residues Ser-149, Glu-150, Ser-174, and His-197 each coordinate 1-deoxy-D-xylulose 5-phosphate. Glu-150 is a Mn(2+) binding site. Gly-203 lines the NADPH pocket. Ser-210, Asn-215, Lys-216, and Glu-219 together coordinate 1-deoxy-D-xylulose 5-phosphate. Mn(2+) is bound at residue Glu-219.

Belongs to the DXR family. Mg(2+) is required as a cofactor. Requires Mn(2+) as cofactor.

The catalysed reaction is 2-C-methyl-D-erythritol 4-phosphate + NADP(+) = 1-deoxy-D-xylulose 5-phosphate + NADPH + H(+). Its pathway is isoprenoid biosynthesis; isopentenyl diphosphate biosynthesis via DXP pathway; isopentenyl diphosphate from 1-deoxy-D-xylulose 5-phosphate: step 1/6. Its function is as follows. Catalyzes the NADPH-dependent rearrangement and reduction of 1-deoxy-D-xylulose-5-phosphate (DXP) to 2-C-methyl-D-erythritol 4-phosphate (MEP). This is 1-deoxy-D-xylulose 5-phosphate reductoisomerase from Ehrlichia ruminantium (strain Gardel).